Consider the following 140-residue polypeptide: Large ribosomal subunit protein bL17 (140 aa).

Basic and acidic residues predominate over residues 119-133 (DPSAKGAADRARLEE). Residues 119–140 (DPSAKGAADRARLEEEGGMTEE) are disordered.

It belongs to the bacterial ribosomal protein bL17 family. In terms of assembly, part of the 50S ribosomal subunit. Contacts protein L32.

The chain is Large ribosomal subunit protein bL17 from Maricaulis maris (strain MCS10) (Caulobacter maris).